The chain runs to 184 residues: Mitochondrial translation release factor in rescue (184 aa).

The transit peptide at 1-98 directs the protein to the mitochondrion; sequence MSSRSTWALL…HVPSGIVVKC (98 aa). Residues 60-124 form a GGQ domain region; sequence ESELEEQFVK…LQEKVDVFYN (65 aa). The short motif at 74–76 is the GGQ element; that stretch reads GGQ. Glutamine 76 carries the post-translational modification N5-methylglutamine. Residues 130–178 adopt a coiled-coil conformation; it reads VHKEKLEAERRKRERKKRAKETLEKKKLLKELREASQNITEKKADADGI. The interval 132–184 is disordered; the sequence is KEKLEAERRKRERKKRAKETLEKKKLLKELREASQNITEKKADADGIPRGFQE. A compositionally biased stretch (basic and acidic residues) spans 149 to 184; sequence KETLEKKKLLKELREASQNITEKKADADGIPRGFQE.

This sequence belongs to the prokaryotic/mitochondrial release factor family. As to quaternary structure, interacts (via C-terminus) with MTRES1 (via S4 domain). Associates with mitoribosomal S39 large subunit, peptidyl tRNA and nascent chain. Methylation of glutamine in the GGQ triplet by HEMK1.

It is found in the mitochondrion. Functionally, part of a mitoribosome-associated quality control pathway that prevents aberrant translation by responding to interruptions during elongation. As heterodimer with MTRES1, ejects the unfinished nascent chain and peptidyl transfer RNA (tRNA), respectively, from stalled ribosomes. Recruitment of mitoribosome biogenesis factors to these quality control intermediates suggests additional roles for MTRES1 and MTRF during mitoribosome rescue. The protein is Mitochondrial translation release factor in rescue of Mus musculus (Mouse).